The following is a 401-amino-acid chain: Phosphoglycerate kinase (401 aa).

Substrate contacts are provided by residues 20–22, R35, 58–61, R117, and R154; these read DFN and HLGR. ATP contacts are provided by residues K204, G298, E329, and 358-361; that span reads GGDS.

The protein belongs to the phosphoglycerate kinase family. Monomer.

Its subcellular location is the cytoplasm. The catalysed reaction is (2R)-3-phosphoglycerate + ATP = (2R)-3-phospho-glyceroyl phosphate + ADP. It functions in the pathway carbohydrate degradation; glycolysis; pyruvate from D-glyceraldehyde 3-phosphate: step 2/5. This Bifidobacterium longum (strain DJO10A) protein is Phosphoglycerate kinase.